A 2387-amino-acid chain; its full sequence is Paternally-expressed gene 3 protein (2387 aa).

An SCAN box domain is found at His44–Tyr126. Disordered stretches follow at residues Glu127–Ala194, Asp262–Ala305, Ala321–Gly371, and Arg392–Arg423. 4 stretches are compositionally biased toward basic and acidic residues: residues Ser160 to Pro179, Pro291 to Ala305, Ala321 to Pro364, and His404 to Arg423. The C2H2-type 1 zinc-finger motif lies at Tyr451–His473. Residues Ser492–Phe542 form a disordered region. The span at Ala513–Gly528 shows a compositional bias: basic and acidic residues. 2 consecutive C2H2-type zinc fingers follow at residues Tyr555 to His577 and Tyr610 to His632. The C2H2-type 4; degenerate zinc finger occupies Tyr668 to His690. Disordered regions lie at residues Pro704–Gly747, Phe764–Tyr797, and Asp820–Arg858. The span at Met711–Ile720 shows a compositional bias: polar residues. Over residues His846–Ile856 the composition is skewed to basic residues. The C2H2-type 5 zinc finger occupies Tyr884–His906. 57 consecutive repeat copies span residues Pro965 to Glu973, Pro974 to Glu982, Pro983 to Ala991, Pro1001 to Glu1009, Pro1010 to Pro1018, Pro1028 to Ala1036, Pro1046 to Glu1054, Pro1055 to Pro1063, Pro1073 to Ala1081, Pro1091 to Glu1099, Pro1109 to Glu1117, Pro1118 to Pro1126, Pro1136 to Glu1144, Pro1145 to Glu1153, Pro1154 to Glu1162, Pro1163 to Glu1171, Pro1172 to Glu1180, Pro1190 to Glu1198, Pro1199 to Glu1207, Pro1217 to Pro1225, Pro1235 to Glu1243, Pro1253 to Glu1261, Pro1280 to Glu1288, Pro1289 to Glu1297, Pro1298 to Glu1306, Pro1307 to Glu1315, Pro1316 to Glu1324, Pro1325 to Glu1333, Pro1334 to Glu1342, Pro1343 to Glu1351, Pro1352 to Glu1360, Pro1361 to Glu1369, Pro1370 to Glu1378, Pro1379 to Glu1387, Pro1388 to Glu1396, Pro1397 to Glu1405, Pro1406 to Glu1414, Pro1415 to Glu1423, Pro1424 to Glu1432, Pro1433 to Glu1441, Pro1442 to Glu1450, Pro1451 to Glu1459, Pro1460 to Glu1468, Pro1469 to Glu1477, Pro1478 to Glu1486, Pro1496 to Glu1504, Pro1505 to Glu1513, Pro1514 to Glu1522, Pro1523 to Glu1531, Pro1532 to Glu1540, Pro1541 to Glu1549, Pro1550 to Glu1558, Pro1559 to Glu1567, Pro1568 to Glu1576, Pro1577 to Glu1585, Pro1586 to Glu1594, and Pro1595 to Glu1603. 2 stretches are compositionally biased toward polar residues: residues Pro965–Thr989 and Pro1001–Ala1020. The interval Pro965–Glu1603 is 37 X 9 AA repeat of P-A-Q-T-X-Y-X-X-E. Residues Pro965–Arg1651 form a disordered region. The segment covering Pro1046–Thr1079 has biased composition (polar residues). Composition is skewed to polar residues over residues Glu1107–Thr1178, Pro1190–Lys1206, Pro1217–Val1242, Glu1251–Thr1484, and Pro1496–Ser1601. Residues Asn1859–Tyr1881 form a C2H2-type 6; degenerate zinc finger. The tract at residues Leu1900–Asp1921 is disordered. The segment covering Ser1905 to Asp1921 has biased composition (acidic residues). 5 consecutive C2H2-type zinc fingers follow at residues Tyr1924–His1946, Tyr1980–His2002, Pro2040–His2062, Tyr2097–His2119, and Tyr2148–His2170. Residues Ala2059 to Cys2102 are disordered. Positions Asn2204–Pro2322 are disordered. Composition is skewed to acidic residues over residues Ala2208 to Ala2228 and Glu2257 to Tyr2311. 2 consecutive C2H2-type zinc fingers follow at residues Tyr2312–His2334 and Phe2363–His2385.

Belongs to the krueppel C2H2-type zinc-finger protein family. In terms of assembly, homodimer. Interacts with SIAH1A and SIAH2. Interacts with TRAF2. As to expression, expressed at high levels in the cerebellum and at moderate levels in the testis and ovary.

It localises to the nucleus. It is found in the cytoplasm. Functionally, induces apoptosis in cooperation with SIAH1A. Acts as a mediator between p53/TP53 and BAX in a neuronal death pathway that is activated by DNA damage. Acts synergistically with TRAF2 and inhibits TNF induced apoptosis through activation of NF-kappa-B. The polypeptide is Paternally-expressed gene 3 protein (PEG3) (Bos taurus (Bovine)).